A 352-amino-acid polypeptide reads, in one-letter code: Dolichol-phosphate mannosyltransferase (352 aa).

At 1–229 (MKVSVIIPTY…HIYRLMKWEG (229 aa)) the chain is on the cytoplasmic side. Residues Pro8, Tyr10, Glu12, Val37, Asp39, Asp89, Ala90, Asp91, Gln93, Arg117, Val156, Lys178, Arg202, and Lys208 each coordinate GDP-alpha-D-mannose. Mg(2+)-binding residues include Asp91 and Gln93. Positions 91 and 93 each coordinate Mn(2+). Residues 230–256 (EIDRIVKFSIVGLSGILVNEGFLWLFV) traverse the membrane as a helical segment. At 257–261 (NLGIP) the chain is on the extracellular side. Residues 262–286 (KEIAVIPAVELSILNNFFWNDIWTF) traverse the membrane as a helical segment. The Cytoplasmic segment spans residues 287–293 (KDIRRGS). A helical membrane pass occupies residues 294 to 320 (IFSRLLKFHIAALSGAVVNFIVYWILL). The Extracellular portion of the chain corresponds to 321-325 (FLGIH). A helical membrane pass occupies residues 326-350 (YLIANLVGIVLSFGVRYVINRHVTW). The Cytoplasmic segment spans residues 351–352 (AT).

It belongs to the glycosyltransferase 2 family. It depends on Mg(2+) as a cofactor. The cofactor is Mn(2+). Requires Ca(2+) as cofactor.

Its subcellular location is the cell membrane. The catalysed reaction is a di-trans,poly-cis-dolichyl phosphate + GDP-alpha-D-mannose = a di-trans,poly-cis-dolichyl beta-D-mannosyl phosphate + GDP. It participates in protein modification; protein glycosylation. In terms of biological role, transfers mannose from GDP-mannose to dolichol monophosphate to form dolichol phosphate mannose (Dol-P-Man) which is the mannosyl donor in pathways leading to N-glycosylation, glycosyl phosphatidylinositol membrane anchoring, and O-mannosylation of proteins. The sequence is that of Dolichol-phosphate mannosyltransferase from Pyrococcus furiosus (strain ATCC 43587 / DSM 3638 / JCM 8422 / Vc1).